Here is a 364-residue protein sequence, read N- to C-terminus: Dual-specificity RNA methyltransferase RlmN (364 aa).

The Proton acceptor role is filled by glutamate 91. Residues 97–333 (ESDRGTLCIS…VTVRKTRGDD (237 aa)) enclose the Radical SAM core domain. A disulfide bond links cysteine 104 and cysteine 338. [4Fe-4S] cluster is bound by residues cysteine 111, cysteine 115, and cysteine 118. Residues 164–165 (GE), serine 196, 218–220 (SLH), and asparagine 295 contribute to the S-adenosyl-L-methionine site. Cysteine 338 functions as the S-methylcysteine intermediate in the catalytic mechanism.

Belongs to the radical SAM superfamily. RlmN family. Requires [4Fe-4S] cluster as cofactor.

The protein localises to the cytoplasm. It carries out the reaction adenosine(2503) in 23S rRNA + 2 reduced [2Fe-2S]-[ferredoxin] + 2 S-adenosyl-L-methionine = 2-methyladenosine(2503) in 23S rRNA + 5'-deoxyadenosine + L-methionine + 2 oxidized [2Fe-2S]-[ferredoxin] + S-adenosyl-L-homocysteine. It catalyses the reaction adenosine(37) in tRNA + 2 reduced [2Fe-2S]-[ferredoxin] + 2 S-adenosyl-L-methionine = 2-methyladenosine(37) in tRNA + 5'-deoxyadenosine + L-methionine + 2 oxidized [2Fe-2S]-[ferredoxin] + S-adenosyl-L-homocysteine. Its function is as follows. Specifically methylates position 2 of adenine 2503 in 23S rRNA and position 2 of adenine 37 in tRNAs. m2A2503 modification seems to play a crucial role in the proofreading step occurring at the peptidyl transferase center and thus would serve to optimize ribosomal fidelity. The polypeptide is Dual-specificity RNA methyltransferase RlmN (Neisseria meningitidis serogroup C (strain 053442)).